Consider the following 358-residue polypeptide: Protein-glutamate methylesterase/protein-glutamine glutaminase 2 (358 aa).

The Response regulatory domain maps to 7–124 (SVLLVDDSAV…KNFLIESAAE (118 aa)). Position 58 is a 4-aspartylphosphate (Asp58). Residues 170 to 358 (AQTTERIVAI…QEIHQAILHR (189 aa)) enclose the CheB-type methylesterase domain. Active-site residues include Ser182, His208, and Asp304.

The protein belongs to the CheB family. Post-translationally, phosphorylated by CheA. Phosphorylation of the N-terminal regulatory domain activates the methylesterase activity.

The protein resides in the cytoplasm. The catalysed reaction is [protein]-L-glutamate 5-O-methyl ester + H2O = L-glutamyl-[protein] + methanol + H(+). It carries out the reaction L-glutaminyl-[protein] + H2O = L-glutamyl-[protein] + NH4(+). Its function is as follows. Involved in chemotaxis. Part of a chemotaxis signal transduction system that modulates chemotaxis in response to various stimuli. Catalyzes the demethylation of specific methylglutamate residues introduced into the chemoreceptors (methyl-accepting chemotaxis proteins or MCP) by CheR. Also mediates the irreversible deamidation of specific glutamine residues to glutamic acid. In Pseudomonas syringae pv. tomato (strain ATCC BAA-871 / DC3000), this protein is Protein-glutamate methylesterase/protein-glutamine glutaminase 2.